The primary structure comprises 234 residues: NAD-reducing hydrogenase HoxS subunit gamma (234 aa).

One can recognise a 2Fe-2S ferredoxin-type domain in the interval 2–77; sequence SIQITIDGKT…GLNVEVNDPE (76 aa). The [2Fe-2S] cluster site is built by Cys35, Cys46, Cys49, and Cys61. The region spanning 77-116 is the 4Fe-4S His(Cys)3-ligated-type domain; that stretch reads ELVDMRKALVEFLFAEGNHNCPSCEKSGRCQLQAVGYEVD. Residues His95, Cys97, Cys100, Cys106, Cys145, Cys148, Cys151, and Cys198 each contribute to the [4Fe-4S] cluster site.

This sequence belongs to the complex I 75 kDa subunit family. As to quaternary structure, tetramer of an alpha and a gamma subunits (flavin-containing dimer), and a delta and a nickel-containing beta subunits (hydrogenase dimer). It depends on [2Fe-2S] cluster as a cofactor. [4Fe-4S] cluster is required as a cofactor.

It is found in the cytoplasm. It carries out the reaction H2 + NAD(+) = NADH + H(+). In terms of biological role, subunits alpha and gamma of HoxS constitute an NADH--oxidoreductase. This chain is NAD-reducing hydrogenase HoxS subunit gamma (hoxU), found in Cupriavidus necator (strain ATCC 17699 / DSM 428 / KCTC 22496 / NCIMB 10442 / H16 / Stanier 337) (Ralstonia eutropha).